The chain runs to 176 residues: Inner membrane-spanning protein YciB (176 aa).

Helical transmembrane passes span 3-23 (FLFDLFPIILFFAAFKLWGIF), 49-69 (TMLWVSLGVIVVFGGATLVLH), 72-92 (KFIQWKPTVLYWLFAVGLVAA), 118-138 (KLNLAWAAFFAALGVTNLYVV), and 149-169 (FKLFGTTGAIVVFVILQSLWL).

Belongs to the YciB family.

It localises to the cell inner membrane. In terms of biological role, plays a role in cell envelope biogenesis, maintenance of cell envelope integrity and membrane homeostasis. The sequence is that of Inner membrane-spanning protein YciB from Burkholderia mallei (strain NCTC 10247).